A 279-amino-acid chain; its full sequence is Zinc-finger homeodomain protein 1 (279 aa).

The span at 1 to 30 (MEFEDNNNNNDEEQEEDMNLHEEEEDDDAV) shows a compositional bias: acidic residues. The segment at 1-62 (MEFEDNNNNN…TTSTGGGGGF (62 aa)) is disordered. A ZF-HD dimerization-type zinc finger spans residues 75-124 (FRECLKNQAVNIGGHAVDGCGEFMPAGIEGTIDALKCAACGCHRNFHRKE). 2 disordered regions span residues 128-199 (FHHA…TKFT) and 245-279 (NNKHTLGKSPSPLHHHQAPPPPPPQSSFHHEQDQP). The span at 134 to 143 (QHQPPPPPPG) shows a compositional bias: pro residues. Residues 191-254 (RKRHRTKFTA…NNKHTLGKSP (64 aa)) constitute a DNA-binding region (homeobox; atypical).

In terms of assembly, homo- and heterodimer with other ZFHD proteins. Interacts with MIF1 and MIF2; these interactions prevent nuclear localization and DNA-binding to inhibit transcription regulation activity. Binds to ZHD2, ZHD3, ZHD4, ZHD5, ZHD6, ZHD7, ZHD8, ZHD9, ZHD10 and ZHD11. Mostly expressed in flowers and inflorescence.

It is found in the nucleus. In terms of biological role, putative transcription factor. The polypeptide is Zinc-finger homeodomain protein 1 (ZHD1) (Arabidopsis thaliana (Mouse-ear cress)).